We begin with the raw amino-acid sequence, 704 residues long: Mannan-binding lectin serine protease 1 (704 aa).

The N-terminal stretch at 1–24 (MRFLSFRRLLLYHVLCLTLTEVSA) is a signal peptide. The CUB 1 domain maps to 25–143 (HTVELNEMFG…TGFDAHYMAV (119 aa)). The homodimerization stretch occupies residues 25-189 (HTVELNEMFG…HTDNRTCRVE (165 aa)). Residues 25–189 (HTVELNEMFG…HTDNRTCRVE (165 aa)) form an interaction with MBL2 region. An interaction with FCN2 region spans residues 25–283 (HTVELNEMFG…STQSHSIQIL (259 aa)). Residues 25-305 (HTVELNEMFG…RLSYRAAGNE (281 aa)) are interaction with MBL1. N54 carries N-linked (GlcNAc...) asparagine glycosylation. Positions 73, 81, 126, 128, 144, 145, and 147 each coordinate Ca(2+). A disulfide bridge links C78 with C96. The 44-residue stretch at 144-187 (DVDECKEREDEELSCDHYCHNYIGGYYCSCRFGYILHTDNRTCR) folds into the EGF-like; calcium-binding domain. Disulfide bonds link C148–C162, C158–C171, C173–C186, and C190–C217. Ca(2+) contacts are provided by N164, Y165, and G168. The residue at position 164 (N164) is a (3R)-3-hydroxyasparagine. N183 is a glycosylation site (N-linked (GlcNAc...) asparagine). The region spanning 190 to 302 (CSGNLFTQRT…RGWRLSYRAA (113 aa)) is the CUB 2 domain. Ca(2+) is bound by residues E240, D250, D287, and S289. Cysteines 247 and 265 form a disulfide. 2 consecutive Sushi domains span residues 304-369 (NECP…TCKI) and 370-439 (VDCG…TCLP). Intrachain disulfides connect C306/C354, C334/C367, C372/C419, C402/C437, C441/C577, and C480/C496. N390 and N412 each carry an N-linked (GlcNAc...) asparagine glycan. The 248-residue stretch at 454-701 (IFNGRPAQKG…NKDWIQRVTG (248 aa)) folds into the Peptidase S1 domain. H495 (charge relay system) is an active-site residue. L538 carries an N-linked (GlcNAc...) asparagine glycan. D557 (charge relay system) is an active-site residue. Residue E604 is glycosylated (N-linked (GlcNAc...) asparagine). Cystine bridges form between C619–C636 and C647–C677. Catalysis depends on S651, which acts as the Charge relay system.

The protein belongs to the peptidase S1 family. Homodimer. Interacts with the oligomeric lectins MBL2, FCN2 and FCN3; triggers the lectin pathway of complement through activation of C3. Interacts with SERPING1. Interacts with COLEC11; probably triggers the lectin pathway of complement. The iron and 2-oxoglutarate dependent 3-hydroxylation of aspartate and asparagine is (R) stereospecific within EGF domains. In terms of processing, N-glycosylated. Some N-linked glycan are of the complex-type. Post-translationally, autoproteolytic processing of the proenzyme produces the active enzyme composed on the heavy and the light chain held together by a disulfide bond. Isoform 1 but not isoform 2 is activated through autoproteolytic processing. As to expression, protein of the plasma which is primarily expressed by liver.

Its subcellular location is the secreted. With respect to regulation, inhibited by SERPING1 and A2M. Functions in the lectin pathway of complement, which performs a key role in innate immunity by recognizing pathogens through patterns of sugar moieties and neutralizing them. The lectin pathway is triggered upon binding of mannan-binding lectin (MBL) and ficolins to sugar moieties which leads to activation of the associated proteases MASP1 and MASP2. Functions as an endopeptidase and may activate MASP2 or C2 or directly activate C3 the key component of complement reaction. Isoform 2 may have an inhibitory effect on the activation of the lectin pathway of complement or may cleave IGFBP5. Also plays a role in development. This chain is Mannan-binding lectin serine protease 1 (Masp1), found in Rattus norvegicus (Rat).